Consider the following 444-residue polypeptide: MTSKTLYQKIYDSHVVYEDKNGESILYIDLHLLHEVTSPQAFDALRSKKRKVRQSKKTFATMDHNVSTKIQSISASGSMAKKQMEQLIKNCRDFNIPLYDINNPNQGIVHVIAPEKGMTLPGMTIVCGDSHTSTHGAFGALAFGIGTSEVEHVLATQTLKQKRFKNMKVEIIGKIPKFVTAKDIILFIIGQLGSSSGTGYVIEFCGDVIKNISMEERMTICNMAIEMGAKSGLIAPDEITYKYLKDKIYSPSGLFWEKSLDYWKFLKSDKNAHFDKCITLDISNLAPQITWGTNPDQVISIDEKIPDYNNINSLLKKESAKSACEYMGLKSNTYLTNISIDRVFIGSCTNARIEDLRAASKILKNRKIAKHVKAIVVPGSGSVKRKAEQEGLDKIFIDSGFEWRLPGCSMCLGMNKDRLNFGERCASTSNRNFEGRQGRGGRTH.

[4Fe-4S] cluster contacts are provided by Cys-348, Cys-408, and Cys-411.

Belongs to the aconitase/IPM isomerase family. LeuC type 1 subfamily. As to quaternary structure, heterodimer of LeuC and LeuD. It depends on [4Fe-4S] cluster as a cofactor.

The catalysed reaction is (2R,3S)-3-isopropylmalate = (2S)-2-isopropylmalate. It participates in amino-acid biosynthesis; L-leucine biosynthesis; L-leucine from 3-methyl-2-oxobutanoate: step 2/4. Functionally, catalyzes the isomerization between 2-isopropylmalate and 3-isopropylmalate, via the formation of 2-isopropylmaleate. The polypeptide is 3-isopropylmalate dehydratase large subunit (Buchnera aphidicola subsp. Uroleucon ambrosiae).